We begin with the raw amino-acid sequence, 316 residues long: MHDWLNNLPKAELHLHLEGSLEPELMFRLAERNKIALPWNDVEALRSAYNFGNLQEFLDLYYAGADVLRTEQDFYDLTWAYLQKCEEQNVVHTEPFFDPQTHTDRGVPFEAALNGISAALADGRELLGISSGLILSFLRHLPEEEAFKTLEQALPYRNAFFAVGLDSSEVGHPPSKFQRVFDKARGEGLLTVAHAGEEGPPEYIWQALDLLKVSRIDHGVRAAEDPKLIARLIEEQIPLTVCPLSNTKLKVFADMRQHNILDLLEQGVKVTVNSDDPAYFGGYVTENFVALHESLGMTEAQARRLAQNSLDARLAY.

Residues H14, H16, and H194 each coordinate Zn(2+). The Proton donor role is filled by E197. Residue D275 participates in Zn(2+) binding. D276 provides a ligand contact to substrate.

This sequence belongs to the metallo-dependent hydrolases superfamily. Adenosine and AMP deaminases family. Adenine deaminase type 2 subfamily. Requires Zn(2+) as cofactor.

It catalyses the reaction adenine + H2O + H(+) = hypoxanthine + NH4(+). Its function is as follows. Catalyzes the hydrolytic deamination of adenine to hypoxanthine. Plays an important role in the purine salvage pathway and in nitrogen catabolism. This Stutzerimonas stutzeri (strain A1501) (Pseudomonas stutzeri) protein is Adenine deaminase.